The chain runs to 883 residues: Phosphoenolpyruvate carboxylase (883 aa).

Residues H138 and K546 contribute to the active site.

The protein belongs to the PEPCase type 1 family. Mg(2+) serves as cofactor.

The catalysed reaction is oxaloacetate + phosphate = phosphoenolpyruvate + hydrogencarbonate. Functionally, forms oxaloacetate, a four-carbon dicarboxylic acid source for the tricarboxylic acid cycle. The protein is Phosphoenolpyruvate carboxylase of Escherichia coli (strain 55989 / EAEC).